The sequence spans 154 residues: Interleukin-2 (154 aa).

The N-terminal stretch at 1–20 (MCKMQLLSCIALSLVLVANS) is a signal peptide. The O-linked (GalNAc...) threonine glycan is linked to Thr-23. The cysteines at positions 78 and 126 are disulfide-linked.

Belongs to the IL-2 family.

The protein localises to the secreted. Cytokine produced by activated CD4-positive helper T-cells and to a lesser extend activated CD8-positive T-cells and natural killer (NK) cells that plays pivotal roles in the immune response and tolerance. Binds to a receptor complex composed of either the high-affinity trimeric IL-2R (IL2RA/CD25, IL2RB/CD122 and IL2RG/CD132) or the low-affinity dimeric IL-2R (IL2RB and IL2RG). Interaction with the receptor leads to oligomerization and conformation changes in the IL-2R subunits resulting in downstream signaling starting with phosphorylation of JAK1 and JAK3. In turn, JAK1 and JAK3 phosphorylate the receptor to form a docking site leading to the phosphorylation of several substrates including STAT5. This process leads to activation of several pathways including STAT, phosphoinositide-3-kinase/PI3K and mitogen-activated protein kinase/MAPK pathways. Functions as a T-cell growth factor and can increase NK-cell cytolytic activity as well. Promotes strong proliferation of activated B-cells and subsequently immunoglobulin production. Plays a pivotal role in regulating the adaptive immune system by controlling the survival and proliferation of regulatory T-cells, which are required for the maintenance of immune tolerance. Moreover, participates in the differentiation and homeostasis of effector T-cell subsets, including Th1, Th2, Th17 as well as memory CD8-positive T-cells. This is Interleukin-2 (IL2) from Mirounga angustirostris (Northern elephant seal).